A 350-amino-acid polypeptide reads, in one-letter code: Ribosomal RNA large subunit methyltransferase Cfr (350 aa).

Glu92 functions as the Proton acceptor in the catalytic mechanism. A Radical SAM core domain is found at 99 to 333; that stretch reads EAGWESFCIS…VTIRSQFGRE (235 aa). An intrachain disulfide couples Cys106 to Cys338. Residues Cys113, Cys117, and Cys120 each contribute to the [4Fe-4S] cluster site. S-adenosyl-L-methionine is bound by residues 159–160, Ser190, 213–215, and Asn293; these read GE and SLH. Cys338 functions as the S-methylcysteine intermediate in the catalytic mechanism.

The protein belongs to the radical SAM superfamily. RlmN family. Cfr subfamily. Requires [4Fe-4S] cluster as cofactor.

Its subcellular location is the cytoplasm. It carries out the reaction adenosine(2503) in 23S rRNA + 2 reduced [2Fe-2S]-[ferredoxin] + 2 S-adenosyl-L-methionine = 8-methyladenosine(2503) in 23S rRNA + 5'-deoxyadenosine + L-methionine + 2 oxidized [2Fe-2S]-[ferredoxin] + S-adenosyl-L-homocysteine. Its function is as follows. Specifically methylates position 8 of adenine 2503 in 23S rRNA. Confers resistance to some classes of antibiotics. This Shouchella clausii (strain KSM-K16) (Alkalihalobacillus clausii) protein is Ribosomal RNA large subunit methyltransferase Cfr.